Here is a 108-residue protein sequence, read N- to C-terminus: uncharacterized protein (108 aa).

A signal peptide spans 1–22 (MMIKQCVICLSLLVFGTTAAHA).

This is an uncharacterized protein from Bacillus subtilis (strain 168).